A 301-amino-acid polypeptide reads, in one-letter code: Putative two-component membrane permease complex subunit SMU_747c (301 aa).

8 helical membrane-spanning segments follow: residues 15 to 35 (LAIFLSIIIEALPFILLGAIL), 60 to 80 (ILFGTFVGFIFPSCECGIVPI), 97 to 117 (FLATAPIINPIVLFATFSAFG), 124 to 144 (FLRLFGAIIVAISLGILLGFI), 188 to 208 (YLIFGSFVAASMQIYVPTRIL), 211 to 231 (IGHNPLTAILIMMLLAFILSL), 238 to 258 (FIGTSLLATFGVAPVVAFLLI), and 278 to 298 (FILQFVGTSSLIIIIYCLIVG).

This sequence belongs to the UPF0718 family. As to quaternary structure, interacts with SMU_746c.

It is found in the cell membrane. In terms of biological role, could be part of a two-component membrane permease system responsible for amino acid transport under low pH. Involved in acidogenesis, biofilm formation and low-pH survival. This is Putative two-component membrane permease complex subunit SMU_747c from Streptococcus mutans serotype c (strain ATCC 700610 / UA159).